A 346-amino-acid chain; its full sequence is Large ribosomal subunit protein uL10 (346 aa).

The segment at 305–346 (EVPAAPAPEAKEEKKEEAEEEEEEKKEVSEEDLSAGLGALFG) is disordered. Acidic residues predominate over residues 322–337 (AEEEEEEKKEVSEEDL).

Belongs to the universal ribosomal protein uL10 family. Part of the 50S ribosomal subunit. Forms part of the ribosomal stalk which helps the ribosome interact with GTP-bound translation factors. Forms a heptameric L10(L12)2(L12)2(L12)2 complex, where L10 forms an elongated spine to which the L12 dimers bind in a sequential fashion.

Its function is as follows. Forms part of the ribosomal stalk, playing a central role in the interaction of the ribosome with GTP-bound translation factors. The protein is Large ribosomal subunit protein uL10 of Ignicoccus hospitalis (strain KIN4/I / DSM 18386 / JCM 14125).